Here is a 190-residue protein sequence, read N- to C-terminus: Protein LIGHT-DEPENDENT SHORT HYPOCOTYLS 1 (190 aa).

Residues 1-26 are compositionally biased toward polar residues; sequence MDLISHQPNKNPNSSTQLTPPSSSRY. Disordered regions lie at residues 1–28 and 145–190; these read MDLISHQPNKNPNSSTQLTPPSSSRYEN and GVSY…GATV. The ALOG domain occupies 25 to 152; sequence RYENQKRRDW…ARGVSYEKKR (128 aa). The Nuclear localization signal signature appears at 150-154; that stretch reads KKRKR. The span at 158-179 shows a compositional bias: low complexity; it reads QKPQTQPPLQLQQQQQQPQQGQ. Residues 180 to 190 are compositionally biased toward polar residues; that stretch reads SMMANYSGATV.

The protein belongs to the plant homeotic and developmental regulators ALOG protein family. In terms of tissue distribution, expressed in hypocotyls, shoot apices and lateral root primordia and, weakly, in vascular tissues.

The protein resides in the nucleus. Functionally, probable transcription regulator that acts as a developmental regulator by promoting cell growth in response to continuous red (cR), far-red (cFR) and blue (cB) light in a phytochrome-dependent manner, at least during seedling development. In Arabidopsis thaliana (Mouse-ear cress), this protein is Protein LIGHT-DEPENDENT SHORT HYPOCOTYLS 1 (LSH1).